Consider the following 40-residue polypeptide: Photosystem II reaction center protein J (40 aa).

The helical transmembrane segment at 8–28 (IPLWVVATIAGLGVITVVGIF) threads the bilayer.

This sequence belongs to the PsbJ family. In terms of assembly, PSII is composed of 1 copy each of membrane proteins PsbA, PsbB, PsbC, PsbD, PsbE, PsbF, PsbH, PsbI, PsbJ, PsbK, PsbL, PsbM, PsbT, PsbX, PsbY, PsbZ, Psb30/Ycf12, peripheral proteins PsbO, CyanoQ (PsbQ), PsbU, PsbV and a large number of cofactors. It forms dimeric complexes.

It is found in the cellular thylakoid membrane. Its function is as follows. One of the components of the core complex of photosystem II (PSII). PSII is a light-driven water:plastoquinone oxidoreductase that uses light energy to abstract electrons from H(2)O, generating O(2) and a proton gradient subsequently used for ATP formation. It consists of a core antenna complex that captures photons, and an electron transfer chain that converts photonic excitation into a charge separation. The chain is Photosystem II reaction center protein J from Nostoc sp. (strain PCC 7120 / SAG 25.82 / UTEX 2576).